The primary structure comprises 832 residues: Prickle-like protein 1 (832 aa).

A PET domain is found at F14–M122. LIM zinc-binding domains are found at residues A124 to K188, P189 to E249, and Y250 to H313. The segment at A314–S342 is disordered. 3 positions are modified to phosphoserine: S315, S592, and S595. 2 disordered regions span residues H663–L688 and S765–S832. Residues R670–K681 are compositionally biased toward basic residues. Residue S684 is modified to Phosphoserine. Polar residues predominate over residues D798–T815. Positions T816 to S832 are enriched in basic residues. A Cysteine methyl ester modification is found at C829. C829 carries S-farnesyl cysteine lipidation. Residues I830–S832 constitute a propeptide, removed in mature form.

The protein belongs to the prickle / espinas / testin family. Interacts with REST.

It localises to the nucleus membrane. It is found in the cytoplasm. Its subcellular location is the cytosol. Involved in the planar cell polarity pathway that controls convergent extension during gastrulation and neural tube closure. Convergent extension is a complex morphogenetic process during which cells elongate, move mediolaterally, and intercalate between neighboring cells, leading to convergence toward the mediolateral axis and extension along the anteroposterior axis. Necessary for nuclear localization of REST. May serve as nuclear receptor. The protein is Prickle-like protein 1 (Prickle1) of Mus musculus (Mouse).